A 553-amino-acid chain; its full sequence is Phenylalanine--tRNA ligase alpha subunit (553 aa).

Threonine 400 and phenylalanine 479 together coordinate L-phenylalanine. Residue glutamate 481 participates in Mg(2+) binding.

It belongs to the class-II aminoacyl-tRNA synthetase family. Phe-tRNA synthetase alpha subunit type 2 subfamily. Tetramer of two alpha and two beta subunits. Mg(2+) is required as a cofactor.

The protein resides in the cytoplasm. The catalysed reaction is tRNA(Phe) + L-phenylalanine + ATP = L-phenylalanyl-tRNA(Phe) + AMP + diphosphate + H(+). The protein is Phenylalanine--tRNA ligase alpha subunit of Treponema pallidum (strain Nichols).